Reading from the N-terminus, the 587-residue chain is Putative adenylate cyclase 3 (587 aa).

The 116-residue stretch at 12 to 127 folds into the Guanylate cyclase domain; that stretch reads AILAADAVGY…DGVNVAARIE (116 aa). 5 TPR repeats span residues 343 to 376, 421 to 454, 455 to 488, 490 to 522, and 524 to 556; these read LLVR…DPGM, PQGH…DPNS, ANAY…DPQF, LSLH…APRS, and MTRF…NPSF.

It belongs to the adenylyl cyclase class-3 family.

It catalyses the reaction ATP = 3',5'-cyclic AMP + diphosphate. The protein is Putative adenylate cyclase 3 (cya3) of Rhizobium meliloti (strain 1021) (Ensifer meliloti).